Here is a 506-residue protein sequence, read N- to C-terminus: Asparagine--tRNA ligase (506 aa).

The protein belongs to the class-II aminoacyl-tRNA synthetase family. Homodimer.

It is found in the cytoplasm. It carries out the reaction tRNA(Asn) + L-asparagine + ATP = L-asparaginyl-tRNA(Asn) + AMP + diphosphate + H(+). The protein is Asparagine--tRNA ligase of Onion yellows phytoplasma (strain OY-M).